We begin with the raw amino-acid sequence, 428 residues long: 3-phosphoshikimate 1-carboxyvinyltransferase (428 aa).

The 3-phosphoshikimate site is built by Lys21, Ser22, and Arg26. Lys21 is a phosphoenolpyruvate binding site. Residues Gly94 and Arg122 each coordinate phosphoenolpyruvate. Positions 166, 167, 168, 194, 306, and 333 each coordinate 3-phosphoshikimate. Residue Gln168 participates in phosphoenolpyruvate binding. Asp306 acts as the Proton acceptor in catalysis. Residues Arg337, Arg379, and Lys405 each coordinate phosphoenolpyruvate.

Belongs to the EPSP synthase family. In terms of assembly, monomer.

It is found in the cytoplasm. It carries out the reaction 3-phosphoshikimate + phosphoenolpyruvate = 5-O-(1-carboxyvinyl)-3-phosphoshikimate + phosphate. The protein operates within metabolic intermediate biosynthesis; chorismate biosynthesis; chorismate from D-erythrose 4-phosphate and phosphoenolpyruvate: step 6/7. Functionally, catalyzes the transfer of the enolpyruvyl moiety of phosphoenolpyruvate (PEP) to the 5-hydroxyl of shikimate-3-phosphate (S3P) to produce enolpyruvyl shikimate-3-phosphate and inorganic phosphate. The chain is 3-phosphoshikimate 1-carboxyvinyltransferase from Clostridium acetobutylicum (strain ATCC 824 / DSM 792 / JCM 1419 / IAM 19013 / LMG 5710 / NBRC 13948 / NRRL B-527 / VKM B-1787 / 2291 / W).